A 250-amino-acid polypeptide reads, in one-letter code: NAD-dependent protein deacetylase (250 aa).

Residues 1 to 244 (MECDKVGDLL…PCVVDYIKSQ (244 aa)) form the Deacetylase sirtuin-type domain. 8 residues coordinate NAD(+): A22, T26, F33, R34, Q98, I100, D101, and H116. A nicotinamide-binding site is contributed by F33. Nicotinamide-binding residues include I100 and D101. H116 functions as the Proton acceptor in the catalytic mechanism. The Zn(2+) site is built by C124, C127, C149, and C151. Residues S187, S188, N212, and V230 each coordinate NAD(+).

This sequence belongs to the sirtuin family. Class U subfamily. Zn(2+) serves as cofactor.

The protein localises to the cytoplasm. It catalyses the reaction N(6)-acetyl-L-lysyl-[protein] + NAD(+) + H2O = 2''-O-acetyl-ADP-D-ribose + nicotinamide + L-lysyl-[protein]. Its function is as follows. NAD-dependent protein deacetylase which modulates the activities of several enzymes which are inactive in their acetylated form. Deacetylates the N-terminal lysine residue of Alba, the major archaeal chromatin protein and that, in turn, increases Alba's DNA binding affinity, thereby repressing transcription. In Sulfurisphaera tokodaii (strain DSM 16993 / JCM 10545 / NBRC 100140 / 7) (Sulfolobus tokodaii), this protein is NAD-dependent protein deacetylase.